Consider the following 208-residue polypeptide: Uracil phosphoribosyltransferase (208 aa).

5-phospho-alpha-D-ribose 1-diphosphate contacts are provided by residues arginine 78, arginine 103, and 130-138 (DPMFATGGT). Uracil contacts are provided by residues isoleucine 193 and 198–200 (GDA). Aspartate 199 lines the 5-phospho-alpha-D-ribose 1-diphosphate pocket.

Belongs to the UPRTase family. Requires Mg(2+) as cofactor.

It carries out the reaction UMP + diphosphate = 5-phospho-alpha-D-ribose 1-diphosphate + uracil. It participates in pyrimidine metabolism; UMP biosynthesis via salvage pathway; UMP from uracil: step 1/1. Allosterically activated by GTP. In terms of biological role, catalyzes the conversion of uracil and 5-phospho-alpha-D-ribose 1-diphosphate (PRPP) to UMP and diphosphate. The polypeptide is Uracil phosphoribosyltransferase (Campylobacter curvus (strain 525.92)).